The primary structure comprises 475 residues: Ankyrin repeat, SAM and basic leucine zipper domain-containing protein 1 (475 aa).

Residues 1-25 are disordered; the sequence is MAAGALRGLPVAGGGESSESEDDGW. Residues Ser-17, Ser-18, and Ser-20 each carry the phosphoserine modification. ANK repeat units lie at residues 45–74, 78–107, 110–144, 148–177, 181–210, and 214–243; these read EKKE…SVDS, YGWT…NASF, DKQS…DPNV, RLMT…EVNT, NGYT…NKML, and DGKM…PLEG. The 63-residue stretch at 272-334 folds into the SAM domain; sequence SYTAFGDLEV…KILAALKELQ (63 aa).

Interacts with DDX4, PIWIL1, RANBP9 and TDRD1.

The protein resides in the cytoplasm. Its function is as follows. Plays a central role during spermatogenesis by repressing transposable elements and preventing their mobilization, which is essential for the germline integrity. Acts via the piRNA metabolic process, which mediates the repression of transposable elements during meiosis by forming complexes composed of piRNAs and Piwi proteins and governs the methylation and subsequent repression of transposons. Its association with pi-bodies suggests a participation in the primary piRNAs metabolic process. Required prior to the pachytene stage to facilitate the production of multiple types of piRNAs, including those associated with repeats involved in the regulation of retrotransposons. May act by mediating protein-protein interactions during germ cell maturation. In Pongo abelii (Sumatran orangutan), this protein is Ankyrin repeat, SAM and basic leucine zipper domain-containing protein 1 (ASZ1).